A 361-amino-acid polypeptide reads, in one-letter code: Phosphoserine aminotransferase (361 aa).

Residue arginine 43 coordinates L-glutamate. Residues 77-78 (AS), tryptophan 103, threonine 152, aspartate 172, and glutamine 195 each bind pyridoxal 5'-phosphate. Lysine 196 is modified (N6-(pyridoxal phosphate)lysine). 237–238 (NT) contributes to the pyridoxal 5'-phosphate binding site.

It belongs to the class-V pyridoxal-phosphate-dependent aminotransferase family. SerC subfamily. In terms of assembly, homodimer. Pyridoxal 5'-phosphate serves as cofactor.

Its subcellular location is the cytoplasm. The enzyme catalyses O-phospho-L-serine + 2-oxoglutarate = 3-phosphooxypyruvate + L-glutamate. The catalysed reaction is 4-(phosphooxy)-L-threonine + 2-oxoglutarate = (R)-3-hydroxy-2-oxo-4-phosphooxybutanoate + L-glutamate. The protein operates within amino-acid biosynthesis; L-serine biosynthesis; L-serine from 3-phospho-D-glycerate: step 2/3. Its pathway is cofactor biosynthesis; pyridoxine 5'-phosphate biosynthesis; pyridoxine 5'-phosphate from D-erythrose 4-phosphate: step 3/5. Catalyzes the reversible conversion of 3-phosphohydroxypyruvate to phosphoserine and of 3-hydroxy-2-oxo-4-phosphonooxybutanoate to phosphohydroxythreonine. This Desulfosudis oleivorans (strain DSM 6200 / JCM 39069 / Hxd3) (Desulfococcus oleovorans) protein is Phosphoserine aminotransferase.